Consider the following 1062-residue polypeptide: Platelet-derived growth factor receptor alpha (1062 aa).

Residues 1 to 27 (MFPPSSAPLLLPQLEELVVPLHTAFTL) form the signal peptide. Ig-like C2-type domains are found at residues 28-96 (TCQG…VYVP), 91-184 (IYVY…VHGW), 190-281 (LHVE…KQIA), 287-381 (SEFM…RTVS), and 389-493 (PAVI…IKLV). Topologically, residues 28 to 504 (TCQGEATIAW…NGPHPELTVA (477 aa)) are extracellular. A disulfide bond links C29 and C74. Residues N79 and N132 are each glycosylated (N-linked (GlcNAc...) asparagine). 2 disulfide bridges follow: C124–C165 and C211–C265. Residues N273, N333, N366, N433, and N444 are each glycosylated (N-linked (GlcNAc...) asparagine). Residues C410 and C477 are joined by a disulfide bond. A helical membrane pass occupies residues 505-525 (AAVLVLLVIVIISLIVLVVIW). Topologically, residues 526–1062 (KQKPRYEIRW…CSDLVEDSFL (537 aa)) are cytoplasmic. A phosphotyrosine; by autocatalysis mark is found at Y548 and Y550. The region spanning 569-945 (LVLGRILGSG…HYERVNHEFL (377 aa)) is the Protein kinase domain. ATP is bound by residues 575 to 583 (LGSGAFGKV) and K603. Phosphotyrosine; by autocatalysis occurs at positions 697, 708, 719, 731, and 739. The tract at residues 734–754 (LQGSNYDHPPSQKGSNDGEMD) is disordered. The active-site Proton acceptor is D793. Phosphotyrosine; by autocatalysis occurs at positions 824 and 963. A compositionally biased stretch (basic and acidic residues) spans 975 to 986 (KDRESGFDEQRL). Residues 975-1034 (KDRESGFDEQRLSSDSGYIIPLPDLDPISDEEYGKRNRHSSQTSEESAIETGSSSSTFAK) form a disordered region. Y992 is subject to Phosphotyrosine; by autocatalysis. Polar residues predominate over residues 1014–1032 (SSQTSEESAIETGSSSSTF).

Belongs to the protein kinase superfamily. Tyr protein kinase family. CSF-1/PDGF receptor subfamily. As to quaternary structure, interacts with homodimeric pdgfa, pdgfb and pdgfc, and with heterodimers formed by pdgfa and pdgfb. monomer in the absence of bound ligand. Interaction with dimeric pdgfa, pdgfb and/or pdgfc leads to receptor dimerization, where both pdgfra homodimers and heterodimers with pdgfrb are observed. Post-translationally, ubiquitinated, leading to its degradation. In terms of processing, autophosphorylated on tyrosine residues upon ligand binding. Autophosphorylation occurs in trans, i.e. one subunit of the dimeric receptor phosphorylates tyrosine residues on the other subunit.

It is found in the cell membrane. It catalyses the reaction L-tyrosyl-[protein] + ATP = O-phospho-L-tyrosyl-[protein] + ADP + H(+). Its activity is regulated as follows. Present in an inactive conformation in the absence of bound ligand. Binding of pdgfa and/or pdgfb leads to dimerization and activation by autophosphorylation on tyrosine residues. Tyrosine-protein kinase that acts as a cell-surface receptor for pdgfa, pdgfb and pdgfc and plays an essential role in the regulation of embryonic development, cell proliferation, survival and chemotaxis. Depending on the context, promotes or inhibits cell proliferation and cell migration. Plays an important role in the differentiation of bone marrow-derived mesenchymal stem cells. Required for normal skeleton development. Required for normal development of the gastrointestinal tract. Plays a role in cell migration and chemotaxis in wound healing. Plays a role in platelet activation, secretion of agonists from platelet granules, and in thrombin-induced platelet aggregation. Binding of its cognate ligands - homodimeric pdgfa, homodimeric pdgfb, heterodimers formed by pdgfa and pdgfb or homodimeric pdgfc -leads to the activation of several signaling cascades; the response depends on the nature of the bound ligand and is modulated by the formation of heterodimers between pdgfra and pdgfrb. Phosphorylates pik3r1, plcg1, and ptpn11. Activation of plcg1 leads to the production of the cellular signaling molecules diacylglycerol and inositol 1,4,5-trisphosphate, mobilization of cytosolic Ca(2+) and the activation of protein kinase C. Phosphorylates pik3r1, the regulatory subunit of phosphatidylinositol 3-kinase, and thereby mediates activation of the AKT1 signaling pathway. Mediates activation of hras and of the MAP kinases mapk1/erk2 and/or mapk3/erk1. Promotes activation of STAT family members stat1, stat3 and stat5a and/or stat5b. Receptor signaling is down-regulated by protein phosphatases that dephosphorylate the receptor and its down-stream effectors, and by rapid internalization of the activated receptor. This chain is Platelet-derived growth factor receptor alpha (pdgfra), found in Takifugu rubripes (Japanese pufferfish).